A 346-amino-acid polypeptide reads, in one-letter code: Protein RecA (346 aa).

67–74 contributes to the ATP binding site; it reads GPESSGKT.

This sequence belongs to the RecA family.

Its subcellular location is the cytoplasm. Functionally, can catalyze the hydrolysis of ATP in the presence of single-stranded DNA, the ATP-dependent uptake of single-stranded DNA by duplex DNA, and the ATP-dependent hybridization of homologous single-stranded DNAs. It interacts with LexA causing its activation and leading to its autocatalytic cleavage. This chain is Protein RecA, found in Mycobacterium ulcerans (strain Agy99).